The primary structure comprises 345 residues: Methylthioribose-1-phosphate isomerase (345 aa).

Substrate-binding positions include 47-49 (RGA), R90, and Q197. D238 functions as the Proton donor in the catalytic mechanism. Residue 248-249 (NK) coordinates substrate.

Belongs to the eIF-2B alpha/beta/delta subunits family. MtnA subfamily.

It catalyses the reaction 5-(methylsulfanyl)-alpha-D-ribose 1-phosphate = 5-(methylsulfanyl)-D-ribulose 1-phosphate. Its pathway is amino-acid biosynthesis; L-methionine biosynthesis via salvage pathway; L-methionine from S-methyl-5-thio-alpha-D-ribose 1-phosphate: step 1/6. Functionally, catalyzes the interconversion of methylthioribose-1-phosphate (MTR-1-P) into methylthioribulose-1-phosphate (MTRu-1-P). The sequence is that of Methylthioribose-1-phosphate isomerase from Caldanaerobacter subterraneus subsp. tengcongensis (strain DSM 15242 / JCM 11007 / NBRC 100824 / MB4) (Thermoanaerobacter tengcongensis).